The sequence spans 83 residues: Mu-theraphotoxin-Hhn2i (83 aa).

The N-terminal stretch at 1 to 21 is a signal peptide; the sequence is MKASMFLALAGLVLLFVVGYA. The propeptide occupies 22–48; sequence SESEEKEFPRELLSKIFAVDDFKGEER. Intrachain disulfides connect cysteine 50–cysteine 65, cysteine 57–cysteine 70, and cysteine 64–cysteine 77. Leucine 81 carries the post-translational modification Leucine amide.

Belongs to the neurotoxin 10 (Hwtx-1) family. 15 (Hntx-3) subfamily. Monomer. Expressed by the venom gland.

Its subcellular location is the secreted. Its function is as follows. Lethal neurotoxin. Selectively blocks tetrodotoxin-sensitive voltage-gated sodium channels (Nav). Does not affect tetrodotoxin-resistant voltage-gated sodium channels or calcium channels. The polypeptide is Mu-theraphotoxin-Hhn2i (Cyriopagopus hainanus (Chinese bird spider)).